Consider the following 400-residue polypeptide: Phosphoglycerate kinase (400 aa).

Residues 22–24, Arg38, 61–64, Arg119, and Arg152 contribute to the substrate site; these read DFN and HLGR. ATP-binding positions include Lys205, Gly296, Glu327, and 353 to 356; that span reads GGDT.

It belongs to the phosphoglycerate kinase family. As to quaternary structure, monomer.

It localises to the cytoplasm. The catalysed reaction is (2R)-3-phosphoglycerate + ATP = (2R)-3-phospho-glyceroyl phosphate + ADP. It functions in the pathway carbohydrate degradation; glycolysis; pyruvate from D-glyceraldehyde 3-phosphate: step 2/5. The polypeptide is Phosphoglycerate kinase (Campylobacter jejuni subsp. jejuni serotype O:23/36 (strain 81-176)).